The sequence spans 162 residues: Phosphopantetheine adenylyltransferase (162 aa).

Thr-10 lines the substrate pocket. Residues 10–11 (TF) and His-18 each bind ATP. Substrate is bound by residues Lys-42, Leu-74, and Arg-88. ATP is bound by residues 89–91 (GLR), Glu-99, and 124–130 (YAFLSSS).

The protein belongs to the bacterial CoaD family. In terms of assembly, homohexamer. Mg(2+) is required as a cofactor.

It is found in the cytoplasm. The catalysed reaction is (R)-4'-phosphopantetheine + ATP + H(+) = 3'-dephospho-CoA + diphosphate. It participates in cofactor biosynthesis; coenzyme A biosynthesis; CoA from (R)-pantothenate: step 4/5. Functionally, reversibly transfers an adenylyl group from ATP to 4'-phosphopantetheine, yielding dephospho-CoA (dPCoA) and pyrophosphate. This chain is Phosphopantetheine adenylyltransferase, found in Methylococcus capsulatus (strain ATCC 33009 / NCIMB 11132 / Bath).